We begin with the raw amino-acid sequence, 102 residues long: Small ribosomal subunit protein uS10 (102 aa).

It belongs to the universal ribosomal protein uS10 family. In terms of assembly, part of the 30S ribosomal subunit.

Functionally, involved in the binding of tRNA to the ribosomes. This Paramagnetospirillum magneticum (strain ATCC 700264 / AMB-1) (Magnetospirillum magneticum) protein is Small ribosomal subunit protein uS10.